The sequence spans 139 residues: Putative lipoprotein MIP_01412 (139 aa).

The first 19 residues, methionine 1–alanine 19, serve as a signal peptide directing secretion. Cysteine 20 carries the N-palmitoyl cysteine lipid modification. The S-diacylglycerol cysteine moiety is linked to residue cysteine 20.

Belongs to the mycobacterial 19 kDa antigen family.

The protein resides in the cell membrane. This Mycobacterium indicus pranii (strain DSM 45239 / MTCC 9506) protein is Putative lipoprotein MIP_01412.